Here is a 140-residue protein sequence, read N- to C-terminus: Ribosome-binding factor A (140 aa).

Belongs to the RbfA family. As to quaternary structure, monomer. Binds 30S ribosomal subunits, but not 50S ribosomal subunits or 70S ribosomes.

It localises to the cytoplasm. One of several proteins that assist in the late maturation steps of the functional core of the 30S ribosomal subunit. Associates with free 30S ribosomal subunits (but not with 30S subunits that are part of 70S ribosomes or polysomes). Required for efficient processing of 16S rRNA. May interact with the 5'-terminal helix region of 16S rRNA. This Cereibacter sphaeroides (strain ATCC 17025 / ATH 2.4.3) (Rhodobacter sphaeroides) protein is Ribosome-binding factor A.